We begin with the raw amino-acid sequence, 190 residues long: MIVGVVDYTVGNIGSVLTALKRAGAVPVVVKGVEEAGRVDAVVLPGVGTYEAAYALARQFKEVVLEKPTLAICLGMQLLFESSEEGGGQGLGVFKGRVERIKARKVPNIGWRYTHVVKNSEIIAEGYYYYLHSYGVRWGENEAYTAYIKLEEKYVAAVERGHIIGVQFHPERSGRTGLELIKRFLAVAKR.

The Glutamine amidotransferase type-1 domain maps to 2–190; that stretch reads IVGVVDYTVG…IKRFLAVAKR (189 aa). The active-site Nucleophile is cysteine 73. Active-site residues include histidine 169 and glutamate 171.

Heterodimer of HisH and HisF.

It localises to the cytoplasm. The catalysed reaction is 5-[(5-phospho-1-deoxy-D-ribulos-1-ylimino)methylamino]-1-(5-phospho-beta-D-ribosyl)imidazole-4-carboxamide + L-glutamine = D-erythro-1-(imidazol-4-yl)glycerol 3-phosphate + 5-amino-1-(5-phospho-beta-D-ribosyl)imidazole-4-carboxamide + L-glutamate + H(+). The enzyme catalyses L-glutamine + H2O = L-glutamate + NH4(+). The protein operates within amino-acid biosynthesis; L-histidine biosynthesis; L-histidine from 5-phospho-alpha-D-ribose 1-diphosphate: step 5/9. IGPS catalyzes the conversion of PRFAR and glutamine to IGP, AICAR and glutamate. The HisH subunit catalyzes the hydrolysis of glutamine to glutamate and ammonia as part of the synthesis of IGP and AICAR. The resulting ammonia molecule is channeled to the active site of HisF. The chain is Imidazole glycerol phosphate synthase subunit HisH from Pyrobaculum aerophilum (strain ATCC 51768 / DSM 7523 / JCM 9630 / CIP 104966 / NBRC 100827 / IM2).